The primary structure comprises 328 residues: DNA-directed RNA polymerase subunit alpha (328 aa).

An alpha N-terminal domain (alpha-NTD) region spans residues 1-235 (MQGSVTEFLK…EQLDAFVDLR (235 aa)). An alpha C-terminal domain (alpha-CTD) region spans residues 249-328 (FDPILLRPVD…ENWPPASLAE (80 aa)).

Belongs to the RNA polymerase alpha chain family. Homodimer. The RNAP catalytic core consists of 2 alpha, 1 beta, 1 beta' and 1 omega subunit. When a sigma factor is associated with the core the holoenzyme is formed, which can initiate transcription.

It catalyses the reaction RNA(n) + a ribonucleoside 5'-triphosphate = RNA(n+1) + diphosphate. DNA-dependent RNA polymerase catalyzes the transcription of DNA into RNA using the four ribonucleoside triphosphates as substrates. This chain is DNA-directed RNA polymerase subunit alpha, found in Pseudoalteromonas translucida (strain TAC 125).